The sequence spans 1035 residues: Potassium-transporting ATPase alpha chain 1 (1035 aa).

Positions 1-41 are disordered; the sequence is MGKAENYELYSVELGPGPGGDMAAKMSKKKKAGGGGGKRKE. Over 1–98 the chain is Cytoplasmic; that stretch reads MGKAENYELY…NALRPPRGTP (98 aa). 2 positions are modified to phosphotyrosine: tyrosine 7 and tyrosine 10. The segment covering 26 to 40 has biased composition (basic residues); that stretch reads MSKKKKAGGGGGKRK. Phosphoserine is present on serine 27. Residues 99–119 traverse the membrane as a helical segment; that stretch reads EYVKFARQLAGGLQCLMWVAA. Over 120–142 the chain is Lumenal; the sequence is AICLIAFAIQASEGDLTTDDNLY. A helical membrane pass occupies residues 143-163; that stretch reads LAIALIAVVVVTGCFGYYQEF. At 164–299 the chain is on the cytoplasmic side; that stretch reads KSTNIIASFK…NEKTPIAIEI (136 aa). A helical membrane pass occupies residues 300 to 319; sequence EHFVDIIAGLAILFGATFFI. At 320–331 the chain is on the lumenal side; sequence VAMCIGYTFLRA. The helical transmembrane segment at 332-349 threads the bilayer; the sequence is MVFFMAIVVAYVPEGLLA. The K(+) site is built by valine 340, alanine 341, valine 343, and glutamate 345. Residues 350–783 are Cytoplasmic-facing; sequence TVTVCLSLTA…EQGRLIFDNL (434 aa). Aspartate 387 serves as the catalytic 4-aspartylphosphate intermediate. Aspartate 387 and threonine 389 together coordinate Mg(2+). Serine 463 and serine 601 each carry phosphoserine. Mg(2+) is bound by residues aspartate 728 and aspartate 732. A helical transmembrane segment spans residues 784–803; the sequence is KKSIAYTLTKNIPELTPYLI. Residue glutamate 797 coordinates K(+). The Lumenal portion of the chain corresponds to 804 to 813; the sequence is YITVSVPLPL. Residues 814–834 traverse the membrane as a helical segment; that stretch reads GCITILFIELCTDIFPSVSLA. Position 822 (glutamate 822) interacts with K(+). Topologically, residues 835 to 854 are cytoplasmic; it reads YEKAESDIMHLRPRNPKRDR. Serine 840 is modified (phosphoserine). A helical transmembrane segment spans residues 855–877; the sequence is LVNEPLAAYSYFQIGAIQSFAGF. The Lumenal portion of the chain corresponds to 878 to 929; that stretch reads TDYFTAMAQEGWFPLLCVGLRAQWEDHHLQDLQDSYGQEWTFGQRLYQQYTC. A helical transmembrane segment spans residues 930-949; that stretch reads YTVFFISIEVCQIADVLIRK. Over 950–963 the chain is Cytoplasmic; sequence TRRLSAFQQGFFRN. At serine 954 the chain carries Phosphoserine; by PKA. Residues 964–982 traverse the membrane as a helical segment; sequence KILVIAIVFQVCIGCFLCY. Over 983-997 the chain is Lumenal; that stretch reads CPGMPNIFNFMPIRF. Residues 998–1018 traverse the membrane as a helical segment; sequence QWWLVPLPYGILIFVYDEIRK. The Cytoplasmic portion of the chain corresponds to 1019-1035; sequence LGVRCCPGSWWDQELYY.

It belongs to the cation transport ATPase (P-type) (TC 3.A.3) family. Type IIC subfamily. As to quaternary structure, the gastric H(+)/K(+) ATPase pump is composed of the catalytic alpha subunit ATP4A and the regulatory beta subunit ATP4B. Interacts (via the P-domain) with ATP4B (via N-terminus); this interaction stabilizes the lumenal-open E2 conformation state and prevents the reverse reaction of the transport cycle. In terms of tissue distribution, expressed in gastric parietal cells (at protein level).

It is found in the apical cell membrane. It catalyses the reaction K(+)(out) + ATP + H2O + H(+)(in) = K(+)(in) + ADP + phosphate + 2 H(+)(out). Functionally, the catalytic subunit of the gastric H(+)/K(+) ATPase pump which transports H(+) ions in exchange for K(+) ions across the apical membrane of parietal cells. Uses ATP as an energy source to pump H(+) ions to the gastric lumen while transporting K(+) ion from the lumen into the cell. Remarkably generates a million-fold proton gradient across the gastric parietal cell membrane, acidifying the gastric juice down to pH 1. Within a transport cycle, the transfer of a H(+) ion across the membrane is coupled to ATP hydrolysis and is associated with a transient phosphorylation that shifts the pump conformation from inward-facing (E1) to outward-facing state (E2). The release of the H(+) ion in the stomach lumen is followed by binding of K(+) ion converting the pump conformation back to the E1 state. This Homo sapiens (Human) protein is Potassium-transporting ATPase alpha chain 1.